Consider the following 874-residue polypeptide: Alanine--tRNA ligase (874 aa).

Residues His-563, His-567, Cys-665, and His-669 each contribute to the Zn(2+) site.

This sequence belongs to the class-II aminoacyl-tRNA synthetase family. Zn(2+) serves as cofactor.

The protein resides in the cytoplasm. The catalysed reaction is tRNA(Ala) + L-alanine + ATP = L-alanyl-tRNA(Ala) + AMP + diphosphate. Its function is as follows. Catalyzes the attachment of alanine to tRNA(Ala) in a two-step reaction: alanine is first activated by ATP to form Ala-AMP and then transferred to the acceptor end of tRNA(Ala). Also edits incorrectly charged Ser-tRNA(Ala) and Gly-tRNA(Ala) via its editing domain. The polypeptide is Alanine--tRNA ligase (Actinobacillus succinogenes (strain ATCC 55618 / DSM 22257 / CCUG 43843 / 130Z)).